We begin with the raw amino-acid sequence, 315 residues long: Protein phosphatase PTC7 homolog fig (315 aa).

Residues 54–309 (KHSIASAKDN…DDITVILATV (256 aa)) form the PPM-type phosphatase domain. The Mn(2+) site is built by Asp86, Gly87, and Asp231.

The protein belongs to the PP2C family. Requires Mg(2+) as cofactor. Mn(2+) serves as cofactor.

It carries out the reaction O-phospho-L-seryl-[protein] + H2O = L-seryl-[protein] + phosphate. The enzyme catalyses O-phospho-L-threonyl-[protein] + H2O = L-threonyl-[protein] + phosphate. This chain is Protein phosphatase PTC7 homolog fig, found in Drosophila willistoni (Fruit fly).